Here is a 154-residue protein sequence, read N- to C-terminus: SsrA-binding protein (154 aa).

Belongs to the SmpB family.

Its subcellular location is the cytoplasm. Required for rescue of stalled ribosomes mediated by trans-translation. Binds to transfer-messenger RNA (tmRNA), required for stable association of tmRNA with ribosomes. tmRNA and SmpB together mimic tRNA shape, replacing the anticodon stem-loop with SmpB. tmRNA is encoded by the ssrA gene; the 2 termini fold to resemble tRNA(Ala) and it encodes a 'tag peptide', a short internal open reading frame. During trans-translation Ala-aminoacylated tmRNA acts like a tRNA, entering the A-site of stalled ribosomes, displacing the stalled mRNA. The ribosome then switches to translate the ORF on the tmRNA; the nascent peptide is terminated with the 'tag peptide' encoded by the tmRNA and targeted for degradation. The ribosome is freed to recommence translation, which seems to be the essential function of trans-translation. The polypeptide is SsrA-binding protein (Acetivibrio thermocellus (strain ATCC 27405 / DSM 1237 / JCM 9322 / NBRC 103400 / NCIMB 10682 / NRRL B-4536 / VPI 7372) (Clostridium thermocellum)).